The primary structure comprises 562 residues: Formate--tetrahydrofolate ligase (562 aa).

71-78 (TPAGEGKS) serves as a coordination point for ATP.

Belongs to the formate--tetrahydrofolate ligase family.

It catalyses the reaction (6S)-5,6,7,8-tetrahydrofolate + formate + ATP = (6R)-10-formyltetrahydrofolate + ADP + phosphate. The protein operates within one-carbon metabolism; tetrahydrofolate interconversion. In Bacillus cereus (strain ATCC 10987 / NRS 248), this protein is Formate--tetrahydrofolate ligase.